Here is a 315-residue protein sequence, read N- to C-terminus: 4-hydroxy-3-methylbut-2-enyl diphosphate reductase (315 aa).

Residue Cys12 coordinates [4Fe-4S] cluster. 2 residues coordinate (2E)-4-hydroxy-3-methylbut-2-enyl diphosphate: His41 and His74. Residues His41 and His74 each coordinate dimethylallyl diphosphate. 2 residues coordinate isopentenyl diphosphate: His41 and His74. Cys96 provides a ligand contact to [4Fe-4S] cluster. Residue His124 coordinates (2E)-4-hydroxy-3-methylbut-2-enyl diphosphate. A dimethylallyl diphosphate-binding site is contributed by His124. His124 contacts isopentenyl diphosphate. Residue Glu126 is the Proton donor of the active site. Thr168 is a (2E)-4-hydroxy-3-methylbut-2-enyl diphosphate binding site. Residue Cys198 coordinates [4Fe-4S] cluster. The (2E)-4-hydroxy-3-methylbut-2-enyl diphosphate site is built by Ser226, Ser227, Asn228, and Ser270. 4 residues coordinate dimethylallyl diphosphate: Ser226, Ser227, Asn228, and Ser270. 4 residues coordinate isopentenyl diphosphate: Ser226, Ser227, Asn228, and Ser270.

This sequence belongs to the IspH family. [4Fe-4S] cluster serves as cofactor.

It carries out the reaction isopentenyl diphosphate + 2 oxidized [2Fe-2S]-[ferredoxin] + H2O = (2E)-4-hydroxy-3-methylbut-2-enyl diphosphate + 2 reduced [2Fe-2S]-[ferredoxin] + 2 H(+). The enzyme catalyses dimethylallyl diphosphate + 2 oxidized [2Fe-2S]-[ferredoxin] + H2O = (2E)-4-hydroxy-3-methylbut-2-enyl diphosphate + 2 reduced [2Fe-2S]-[ferredoxin] + 2 H(+). It functions in the pathway isoprenoid biosynthesis; dimethylallyl diphosphate biosynthesis; dimethylallyl diphosphate from (2E)-4-hydroxy-3-methylbutenyl diphosphate: step 1/1. The protein operates within isoprenoid biosynthesis; isopentenyl diphosphate biosynthesis via DXP pathway; isopentenyl diphosphate from 1-deoxy-D-xylulose 5-phosphate: step 6/6. Its function is as follows. Catalyzes the conversion of 1-hydroxy-2-methyl-2-(E)-butenyl 4-diphosphate (HMBPP) into a mixture of isopentenyl diphosphate (IPP) and dimethylallyl diphosphate (DMAPP). Acts in the terminal step of the DOXP/MEP pathway for isoprenoid precursor biosynthesis. The chain is 4-hydroxy-3-methylbut-2-enyl diphosphate reductase from Pseudomonas syringae pv. syringae (strain B728a).